Consider the following 464-residue polypeptide: Heterogeneous nuclear ribonucleoprotein K (464 aa).

Met-1 is subject to N-acetylmethionine. Residues 1-37 are disordered; sequence METEQPEETFPNTETNGEFGKRPAEDMEEEQAFKRSR. The interval 1–276 is necessary for interaction with DDX1; the sequence is METEQPEETF…GRGGRPMPPS (276 aa). Residues 19–37 are compositionally biased toward basic and acidic residues; the sequence is FGKRPAEDMEEEQAFKRSR. The residue at position 34 (Lys-34) is an N6-acetyllysine; alternate. Lys-34 is covalently cross-linked (Glycyl lysine isopeptide (Lys-Gly) (interchain with G-Cter in SUMO1); alternate). Lys-34 is covalently cross-linked (Glycyl lysine isopeptide (Lys-Gly) (interchain with G-Cter in SUMO2); alternate). Ser-36 bears the Phosphoserine mark. Position 39 is a phosphothreonine (Thr-39). The KH 1 domain maps to 42–104; that stretch reads MVELRILLQS…ETIGEILKKI (63 aa). Residues Lys-52 and Lys-60 each participate in a glycyl lysine isopeptide (Lys-Gly) (interchain with G-Cter in SUMO2) cross-link. Repeat copies occupy residues 54–76 and 59–62. Residues 54 to 421 form a 2 X 22 AA approximate repeats region; sequence AGAVIGKGGK…QIRHESGASI (368 aa). Residues 59-407 are 5 X 4 AA repeats of G-X-G-G; sequence GKGGKNIKAL…LAGSIIGKGG (349 aa). Phosphoserine occurs at positions 75 and 116. One can recognise a KH 2 domain in the interval 144 to 209; it reads DCELRLLIHQ…DRVVECIKII (66 aa). Residue Lys-163 forms a Glycyl lysine isopeptide (Lys-Gly) (interchain with G-Cter in SUMO1); alternate linkage. Lys-163 is covalently cross-linked (Glycyl lysine isopeptide (Lys-Gly) (interchain with G-Cter in SUMO2); alternate). An N6-acetyllysine modification is found at Lys-198. The interaction with ZIK1 stretch occupies residues 209–337; that stretch reads ILDLISESPI…RPGDRYDGMV (129 aa). 2 positions are modified to phosphoserine: Ser-214 and Ser-216. Residue Lys-219 forms a Glycyl lysine isopeptide (Lys-Gly) (interchain with G-Cter in SUMO2); alternate linkage. Lys-219 carries the post-translational modification N6-succinyllysine; alternate. The interval 236–273 is RNA-binding RGG-box; it reads YGGFTMMFDDRRGRPVGFPMRGRGGFDRMPPGRGGRPM. Repeat copies occupy residues 245-250, 257-260, and 267-270. The 2 X 6 AA approximate repeats stretch occupies residues 245–329; that stretch reads DRRGRPVGFP…LMAYDRRGRP (85 aa). Positions 250 to 329 are disordered; it reads PVGFPMRGRG…LMAYDRRGRP (80 aa). A compositionally biased stretch (low complexity) spans 252 to 266; the sequence is GFPMRGRGGFDRMPP. Over residues 276–285 the composition is skewed to basic and acidic residues; that stretch reads SRRDYDDMSP. Ser-284 carries the phosphoserine modification. The 3-4 repeat unit spans residues 295–298; the sequence is GRGG. Arg-316 carries the omega-N-methylarginine modification. The 2-2 repeat unit spans residues 324–329; the sequence is DRRGRP. Arg-377 carries the post-translational modification Omega-N-methylarginine. Ser-379 is modified (phosphoserine). Residue Tyr-380 is modified to Phosphotyrosine. In terms of domain architecture, KH 3 spans 387–451; that stretch reads IITTQVTIPK…DQIQNAQYLL (65 aa). A run of 2 repeats spans residues 399–421 and 404–407. Lys-405 is modified (N6-acetyllysine; alternate). Lys-405 is covalently cross-linked (Glycyl lysine isopeptide (Lys-Gly) (interchain with G-Cter in SUMO2); alternate). Ser-420 is modified (phosphoserine). Residue Lys-422 forms a Glycyl lysine isopeptide (Lys-Gly) (interchain with G-Cter in SUMO1); alternate linkage. Residue Lys-422 forms a Glycyl lysine isopeptide (Lys-Gly) (interchain with G-Cter in SUMO2); alternate linkage. Lys-422 is covalently cross-linked (Glycyl lysine isopeptide (Lys-Gly) (interchain with G-Cter in SUMO); alternate).

As to quaternary structure, identified in the spliceosome C complex. Interacts with ANKRD28, RBM42 and ZIK1. Interacts with DDX1. Interacts with MDM2; this interaction leads to ubiquitination and proteasomal degradation. Interacts with p53/TP53. Interacts with BRDT. Interacts with IVNS1ABP. Interacts with PPIA/CYPA. Part of a transcription inhibitory ribonucleoprotein complex composed at least of the circular RNA circZNF827, ZNF827 and HNRNPL. In terms of processing, sumoylated by CBX4. Sumoylation is increased upon DNA damage, such as that produced by doxorubicin, etoposide, UV light and camptothecin, due to enhanced CBX4 phosphorylation by HIPK2 under these conditions. Post-translationally, ubiquitinated by MDM2. Doxorubicin treatment does not affect monoubiquitination, but slightly decreases HNRNPK poly-ubiquitination. O-glycosylated (O-GlcNAcylated), in a cell cycle-dependent manner.

The protein localises to the cytoplasm. It localises to the nucleus. It is found in the nucleoplasm. Its subcellular location is the cell projection. The protein resides in the podosome. One of the major pre-mRNA-binding proteins. Binds tenaciously to poly(C) sequences. Likely to play a role in the nuclear metabolism of hnRNAs, particularly for pre-mRNAs that contain cytidine-rich sequences. Can also bind poly(C) single-stranded DNA. Plays an important role in p53/TP53 response to DNA damage, acting at the level of both transcription activation and repression. When sumoylated, acts as a transcriptional coactivator of p53/TP53, playing a role in p21/CDKN1A and 14-3-3 sigma/SFN induction. As far as transcription repression is concerned, acts by interacting with long intergenic RNA p21 (lincRNA-p21), a non-coding RNA induced by p53/TP53. This interaction is necessary for the induction of apoptosis, but not cell cycle arrest. As part of a ribonucleoprotein complex composed at least of ZNF827, HNRNPL and the circular RNA circZNF827 that nucleates the complex on chromatin, may negatively regulate the transcription of genes involved in neuronal differentiation. The polypeptide is Heterogeneous nuclear ribonucleoprotein K (HNRNPK) (Bos taurus (Bovine)).